Here is a 304-residue protein sequence, read N- to C-terminus: MDNTIPGGINITILIPNLMIIIFGLVGLTGNGIVFWLLGFCLHRNAFSVYILNLALADFFFLLGHIIDSILLLLNVFYPITFLLCFYTIMMVLYIAGLSMLSAISTERCLSVLCPIWYHCHRPEHTSTVMCAVIWVLSLLICILNSYFCGFLNTQYKNENGCLALNFFTAAYLMFLFVVLCLSSLALVARLFCGTGQIKLTRLYVTIILSILVFLLCGLPFGIHWFLLFKIKDDFHVFDLGFYLASVVLTAINSCANPIIYFFVGSFRHRLKHQTLKMVLQNALQDTPETAKIMVEMSRSKSEP.

Over 1–17 the chain is Extracellular; sequence MDNTIPGGINITILIPN. Residue asparagine 10 is glycosylated (N-linked (GlcNAc...) asparagine). A helical membrane pass occupies residues 18-38; the sequence is LMIIIFGLVGLTGNGIVFWLL. The Cytoplasmic segment spans residues 39 to 53; sequence GFCLHRNAFSVYILN. The helical transmembrane segment at 54–74 threads the bilayer; that stretch reads LALADFFFLLGHIIDSILLLL. Position 75 (asparagine 75) is a topological domain, extracellular. The chain crosses the membrane as a helical span at residues 76 to 96; that stretch reads VFYPITFLLCFYTIMMVLYIA. At 97-131 the chain is on the cytoplasmic side; sequence GLSMLSAISTERCLSVLCPIWYHCHRPEHTSTVMC. The chain crosses the membrane as a helical span at residues 132-152; the sequence is AVIWVLSLLICILNSYFCGFL. Topologically, residues 153–166 are extracellular; it reads NTQYKNENGCLALN. Residues 167–187 traverse the membrane as a helical segment; that stretch reads FFTAAYLMFLFVVLCLSSLAL. Topologically, residues 188–206 are cytoplasmic; it reads VARLFCGTGQIKLTRLYVT. Residues 207-227 form a helical membrane-spanning segment; it reads IILSILVFLLCGLPFGIHWFL. The Extracellular portion of the chain corresponds to 228–243; that stretch reads LFKIKDDFHVFDLGFY. The helical transmembrane segment at 244 to 264 threads the bilayer; the sequence is LASVVLTAINSCANPIIYFFV. Topologically, residues 265-304 are cytoplasmic; it reads GSFRHRLKHQTLKMVLQNALQDTPETAKIMVEMSRSKSEP.

It belongs to the G-protein coupled receptor 1 family. Mas subfamily. Expressed in a subset of sensory neurons that includes nociceptors. Expressed in the subclass of non-peptidergic sensory neurons that are IB4(+) and VR1(-).

The protein localises to the cell membrane. Functionally, orphan receptor activated by a subset of RFamide-family neuropeptides such as FLRF-amide and FMRF-amide. Mediates its action by association with G proteins that activate a phosphatidylinositol-calcium second messenger system. Its effect is mediated by G(q) and G(11) proteins. May regulate the function of nociceptive neurons by modulation of pain perception. This chain is Mas-related G-protein coupled receptor member A1 (Mrgpra1), found in Mus musculus (Mouse).